Here is a 356-residue protein sequence, read N- to C-terminus: Guanine nucleotide-binding protein alpha-17 subunit (356 aa).

A lipid anchor (N-myristoyl glycine) is attached at Gly-2. Cys-4 carries S-palmitoyl cysteine lipidation. The 325-residue stretch at Ser-32–Met-356 folds into the G-alpha domain. Residues Lys-35–Thr-48 are G1 motif. GTP contacts are provided by residues Gly-40–Ser-47, Leu-177–Thr-183, Asp-202–Gln-206, Asn-271–Asp-274, and Ala-328. Positions 47 and 183 each coordinate Mg(2+). The tract at residues Asp-175–Thr-183 is G2 motif. A G3 motif region spans residues Phe-198–Arg-207. The segment at Ile-267–Asp-274 is G4 motif. The segment at Thr-326–Thr-331 is G5 motif.

This sequence belongs to the G-alpha family. As to quaternary structure, g proteins are composed of 3 units; alpha, beta and gamma. The alpha chain contains the guanine nucleotide binding site. Expressed in sensory neurons in the head and tail. Expressed in amphid AWC neurons, to a lesser extent in AWB and weakly in AWA, ASH and ADF neurons (head sensory neurons). Expressed in phasmid PHA and PHB neurons (tail sensory neurons).

Its subcellular location is the cell projection. It is found in the cilium. The protein resides in the dendrite. In terms of biological role, guanine nucleotide-binding proteins (G proteins) are involved as modulators or transducers in various transmembrane signaling systems. This specific G-alpha subunit plays an important role in olfaction and in cilia morphogenesis. Involved in chemotactic responses to attractants diacetyl, pyrazine, 2,4,5-trimethylthiazole, benzaldehyde, isoamyl alcohol, butanone and 2,3-pentanedione. Displays a redundant function with gpa-3 in chemotactic responses. Plays a role in the avoidance response to the noxious chemical quinine in ASH sensory neurons. Involved in avoidance responses to copper, sodium dodecyl sulfate and linoleic acid. Involved in osmotic avoidance and mechanosensory responses. Involved in specifying fan-like morphology of cilia of head sensory neurons AWC. Plays a role in the detection of preferred food sources by mediating the recognition of food odors in olfactory sensory neurons. This Caenorhabditis elegans protein is Guanine nucleotide-binding protein alpha-17 subunit.